The following is a 330-amino-acid chain: Complement factor H-related protein 1 (330 aa).

Residues 1 to 18 (MWLLVSVILISRISSVGG) form the signal peptide. Sushi domains are found at residues 22–84 (FCDF…PKCL), 85–142 (RLCF…KCRS), 145–203 (TSCV…QCKD), 206–264 (GKCG…KCLH), and 273–329 (MENY…TCAK). Disulfide bonds link Cys23–Cys72, Cys55–Cys83, Cys87–Cys129, Cys114–Cys140, Cys147–Cys190, Cys176–Cys201, Cys208–Cys251, Cys237–Cys262, Cys266–Cys317, and Cys300–Cys327. A glycan (N-linked (GlcNAc...) asparagine) is linked at Asn126. A glycan (N-linked (GlcNAc...) asparagine) is linked at Asn194.

Head-to-tail homodimer and heterodimer with CFHR2 or CFHR5. In terms of assembly, (Microbial infection) Interacts with C.albicans GPD2; the interaction is direct and leads to the degradation of C3. N-glycosylated. Two forms are observed; one with a single side chain and the other with two. As to expression, expressed by the liver and secreted in plasma.

The protein localises to the secreted. Involved in complement regulation. The dimerized forms have avidity for tissue-bound complement fragments and efficiently compete with the physiological complement inhibitor CFH. Can associate with lipoproteins and may play a role in lipid metabolism. The polypeptide is Complement factor H-related protein 1 (CFHR1) (Homo sapiens (Human)).